Consider the following 340-residue polypeptide: Probable protein phosphatase 2C 21 (340 aa).

Positions 1–21 (MGASPSRPLEQSPSSSEGENH) are disordered. One can recognise a PPM-type phosphatase domain in the interval 24-305 (KYASYTTQGF…DNATAILVKF (282 aa)). Asp58, Gly59, Asp254, and Asp296 together coordinate Mn(2+). Residues 311–340 (DPDEVASARDEHQHNPEGGDEKLDINNDND) form a disordered region. Basic and acidic residues predominate over residues 316–340 (ASARDEHQHNPEGGDEKLDINNDND).

Belongs to the PP2C family. The cofactor is Mg(2+). Requires Mn(2+) as cofactor.

It catalyses the reaction O-phospho-L-seryl-[protein] + H2O = L-seryl-[protein] + phosphate. The enzyme catalyses O-phospho-L-threonyl-[protein] + H2O = L-threonyl-[protein] + phosphate. This chain is Probable protein phosphatase 2C 21, found in Oryza sativa subsp. japonica (Rice).